Here is a 326-residue protein sequence, read N- to C-terminus: Aspartate carbamoyltransferase catalytic subunit (326 aa).

2 residues coordinate carbamoyl phosphate: Arg55 and Thr56. Residue Lys83 participates in L-aspartate binding. 3 residues coordinate carbamoyl phosphate: Arg105, His135, and Gln138. Residues Arg176 and Arg230 each contribute to the L-aspartate site. The carbamoyl phosphate site is built by Gly271 and Pro272.

It belongs to the aspartate/ornithine carbamoyltransferase superfamily. ATCase family. As to quaternary structure, heterododecamer (2C3:3R2) of six catalytic PyrB chains organized as two trimers (C3), and six regulatory PyrI chains organized as three dimers (R2).

The enzyme catalyses carbamoyl phosphate + L-aspartate = N-carbamoyl-L-aspartate + phosphate + H(+). It participates in pyrimidine metabolism; UMP biosynthesis via de novo pathway; (S)-dihydroorotate from bicarbonate: step 2/3. Catalyzes the condensation of carbamoyl phosphate and aspartate to form carbamoyl aspartate and inorganic phosphate, the committed step in the de novo pyrimidine nucleotide biosynthesis pathway. In Streptomyces coelicolor (strain ATCC BAA-471 / A3(2) / M145), this protein is Aspartate carbamoyltransferase catalytic subunit.